Here is a 215-residue protein sequence, read N- to C-terminus: MGCYSMGFVGRKAGMSRVFLEDGCSIPVTLIEATANRVVQIKTSDVDGYDAVQVTVGSRRSVLVNKPESGHFAKAKVEAGRGLWEFRVEKTQLGSYSVGSEVGLSIFAVGQKVDIQGITKGKGFQGTIKRHNFRMGDATHGNSLSHRAPGSLGQRQTPGRVFPGKKMSGHMGAVRQSVQNLEVVKIDVERCLIAVRGAIPGASGGDVLIRSASKI.

Residue glutamine 156 is modified to N5-methylglutamine.

Belongs to the universal ribosomal protein uL3 family. In terms of assembly, part of the 50S ribosomal subunit. Forms a cluster with proteins L14 and L19. Methylated by PrmB.

One of the primary rRNA binding proteins, it binds directly near the 3'-end of the 23S rRNA, where it nucleates assembly of the 50S subunit. This is Large ribosomal subunit protein uL3 from Xylella fastidiosa (strain 9a5c).